We begin with the raw amino-acid sequence, 172 residues long: GTP-dependent dephospho-CoA kinase (172 aa).

GTP is bound by residues D49, V50, V51, D68, K70, and E120.

The protein belongs to the GTP-dependent DPCK family.

It catalyses the reaction 3'-dephospho-CoA + GTP = GDP + CoA + H(+). It functions in the pathway cofactor biosynthesis; coenzyme A biosynthesis. Functionally, catalyzes the GTP-dependent phosphorylation of the 3'-hydroxyl group of dephosphocoenzyme A to form coenzyme A (CoA). The polypeptide is GTP-dependent dephospho-CoA kinase (Pyrobaculum arsenaticum (strain DSM 13514 / JCM 11321 / PZ6)).